The chain runs to 165 residues: Pro-MCH (165 aa).

Residues 1–21 (MAKMSLSSYLLILTFSLFSQG) form the signal peptide. Positions 68 to 88 (NDDSSFMNDEENKNSKNTGSK) are disordered. Position 143 is an isoleucine amide (I143). C153 and C162 are oxidised to a cystine.

This sequence belongs to the melanin-concentrating hormone family. Post-translationally, pro-MCH is processed differentially in the brain and in peripheral organs producing two neuropeptides; NEI and MCH. A third peptide, NGE, may also be produced. Preferential processing in neurons by prohormone convertase 2 (PC2) generates NEI. MCH is generated in neurons of the lateral hypothalmic area by several prohormone convertases including PC1/3, PC2 and PC5/6.

Its subcellular location is the secreted. Its function is as follows. MCH may act as a neurotransmitter or neuromodulator in a broad array of neuronal functions directed toward the regulation of goal-directed behavior, such as food intake, and general arousal. The sequence is that of Pro-MCH (PMCH) from Canis lupus familiaris (Dog).